We begin with the raw amino-acid sequence, 890 residues long: MLTSPTLKSLWFLFTILGLLGQNLPCVLSSSHRILVDTDVDTDDLFAILYLLKLNKSEFDLVGITLSANAWTNAGHAVNQVYDLLHMMDRDDIPVGVGGEGGISDDGTIHSDVGGYFPIIEQGMTTTGECRYRQAIPKGLGGLLDIDSNYGFRKQFLPQGNRRYTPLQQPTAQKVIVDKISEGPTTVILLGSHTNFALFLMSNPHLKHNIQHIYIMGGGVRSQNPTGCCPANSTVAECQPRQCGNRGNLFTDYTSNPYSEFNIFADPFAAYQVFHSGVPVTLVPLDATNTIPINQKFFETFENNYQRTYEAQYVFLSLKIARDTWFDDEFYKSYFMWDSFTAGVAVSIMRNSANKNNKNGENDFAEMEYMNITVVTSNKPYGRSDGSNPFFDNRRTPKFNLALGGVHSGHVQTGLRDPTCLPKSGIGRGKCKDGYTQEISGSDSVRVLVATRAKPNINIKSKLDREFYVDFLEVLNRPEETGRFNFSSQFPYYKEELFRPDLSKTRPGKPVVFDMDMSAGDFLSLFYLLKVPVDKIDLKAIIVSPTGWANAATIDVVYDLLHMMGRDDIPVGLGDMLALNQSDPIFPPVGGCKYVKAIPRGCGGFLDSDTLYGLARDLPRSPRRYTAENSVTHGAPRDTDRPELRQPLAIEVWQNLTKSGNGVSKITVLTNGPLTNLAKIISSDKKSSSLIKEVYIVGGHINREKSDKGNIFTIPSNAYAEFNMFLDPLAAKTVLESALNITLVPLATQHKLSSFQTMLDRLYSSTKTPEARFVKRLLVRLQALHQKHRRYTHIDMFLGEVLGAVLLGGDDASLKPKMRAEHIKVIAEGDESRDGKILIDKLRGKQIKILERVDLISISESFASRLDDKKQSAVIGSFEEQKKIWSTPPS.

A signal peptide spans 1-21 (MLTSPTLKSLWFLFTILGLLG). N-linked (GlcNAc...) asparagine glycans are attached at residues Asn-55, Asn-232, Asn-371, Asn-485, Asn-580, Asn-655, and Asn-740.

This sequence belongs to the IUNH family.

Its subcellular location is the secreted. The protein localises to the extracellular space. The protein resides in the apoplast. The catalysed reaction is a purine D-ribonucleoside + H2O = a purine nucleobase + D-ribose. It catalyses the reaction inosine + H2O = hypoxanthine + D-ribose. The enzyme catalyses adenosine + H2O = D-ribose + adenine. Its function is as follows. Extracellular purine-specific hydrolase present in the apoplastic fluid involved in the degradation of extracellular nucleosides, including inosine and adenosine, and which may participate in wound and pathogen responses (e.g. Botrytis cinerea). This Arabidopsis thaliana (Mouse-ear cress) protein is Nucleoside hydrolase 3.